The following is a 180-amino-acid chain: Crossover junction endodeoxyribonuclease RuvC (180 aa).

Residues D7, E66, and D138 contribute to the active site. Mg(2+) contacts are provided by D7, E66, and D138.

It belongs to the RuvC family. Homodimer which binds Holliday junction (HJ) DNA. The HJ becomes 2-fold symmetrical on binding to RuvC with unstacked arms; it has a different conformation from HJ DNA in complex with RuvA. In the full resolvosome a probable DNA-RuvA(4)-RuvB(12)-RuvC(2) complex forms which resolves the HJ. Mg(2+) is required as a cofactor.

Its subcellular location is the cytoplasm. The catalysed reaction is Endonucleolytic cleavage at a junction such as a reciprocal single-stranded crossover between two homologous DNA duplexes (Holliday junction).. The RuvA-RuvB-RuvC complex processes Holliday junction (HJ) DNA during genetic recombination and DNA repair. Endonuclease that resolves HJ intermediates. Cleaves cruciform DNA by making single-stranded nicks across the HJ at symmetrical positions within the homologous arms, yielding a 5'-phosphate and a 3'-hydroxyl group; requires a central core of homology in the junction. The consensus cleavage sequence is 5'-(A/T)TT(C/G)-3'. Cleavage occurs on the 3'-side of the TT dinucleotide at the point of strand exchange. HJ branch migration catalyzed by RuvA-RuvB allows RuvC to scan DNA until it finds its consensus sequence, where it cleaves and resolves the cruciform DNA. The sequence is that of Crossover junction endodeoxyribonuclease RuvC from Paraburkholderia phymatum (strain DSM 17167 / CIP 108236 / LMG 21445 / STM815) (Burkholderia phymatum).